The following is a 757-amino-acid chain: Cell cycle progression protein 1 (757 aa).

The Cytoplasmic portion of the chain corresponds to 1–217 (MSENSSDSDS…KRQFSSGLNK (217 aa)). An interaction with MCF2L and SRC region spans residues 1 to 308 (MSENSSDSDS…QKTNLATENQ (308 aa)). Positions 152–207 (VFSSQPSDDESSSDETSNQPSPAFRRRRARKKTVSASESEDRLVAEQETEPSKELS) are disordered. The segment covering 175–184 (FRRRRARKKT) has biased composition (basic residues). Phosphoserine is present on Ser186. Residues 190 to 207 (SEDRLVAEQETEPSKELS) show a composition bias toward basic and acidic residues. Residues 218-238 (CVILALVIAISMGFGHFYGTI) form a helical; Signal-anchor for type II membrane protein membrane-spanning segment. The Lumenal portion of the chain corresponds to 239–757 (QIQKRQQLVR…YIKPCHYSSL (519 aa)). 2 coiled-coil regions span residues 248–272 (RKIH…QESF) and 306–450 (ENQY…LWER). Basic and acidic residues predominate over residues 458–468 (QNGKQGTDGKK). The interval 458–483 (QNGKQGTDGKKKGGRGSHRAKNKSKE) is disordered. Residues 469–479 (KGGRGSHRAKN) are compositionally biased toward basic residues. A coiled-coil region spans residues 504–530 (VRHHKEKIKQAKEAVKENLKKFSDSVK).

This sequence belongs to the CCPG1 family. As to quaternary structure, interacts with MCF2L. May interact with MCF2, ARHGEF1, BCR, VAV1 and FGD1, but not with TIAM1. Interacts with GTP-bound CDC42 and SRC.

The protein resides in the cytoplasmic granule membrane. In terms of biological role, acts as an assembly platform for Rho protein signaling complexes. Limits guanine nucleotide exchange activity of MCF2L toward RHOA, which results in an inhibition of both its transcriptional activation ability and its transforming activity. Does not inhibit activity of MCF2L toward CDC42, or activity of MCF2 toward either RHOA or CDC42. May be involved in cell cycle regulation. The polypeptide is Cell cycle progression protein 1 (CCPG1) (Homo sapiens (Human)).